We begin with the raw amino-acid sequence, 349 residues long: Glycerol-3-phosphate dehydrogenase [NAD(+)], cytoplasmic (349 aa).

Residues 10–15, Lys-120, and Ala-153 contribute to the NAD(+) site; that span reads GSGDWG. Lys-120 contacts substrate. A Phosphoserine modification is found at Ser-154. Catalysis depends on Lys-204, which acts as the Proton acceptor. Arg-269 is a binding site for NAD(+). 269 to 270 serves as a coordination point for substrate; sequence RN. Lys-289 carries the post-translational modification N6-succinyllysine. NAD(+) contacts are provided by Lys-296 and Gln-298. Tyr-326 bears the Phosphotyrosine mark.

This sequence belongs to the NAD-dependent glycerol-3-phosphate dehydrogenase family. As to quaternary structure, homodimer.

Its subcellular location is the cytoplasm. The catalysed reaction is sn-glycerol 3-phosphate + NAD(+) = dihydroxyacetone phosphate + NADH + H(+). Has glycerol-3-phosphate dehydrogenase activity. This is Glycerol-3-phosphate dehydrogenase [NAD(+)], cytoplasmic (GPD1) from Oryctolagus cuniculus (Rabbit).